The sequence spans 220 residues: ATP-dependent Clp protease proteolytic subunit (220 aa).

The active-site Nucleophile is Ser122. His147 is an active-site residue.

It belongs to the peptidase S14 family. As to quaternary structure, fourteen ClpP subunits assemble into 2 heptameric rings which stack back to back to give a disk-like structure with a central cavity, resembling the structure of eukaryotic proteasomes.

It localises to the cytoplasm. It carries out the reaction Hydrolysis of proteins to small peptides in the presence of ATP and magnesium. alpha-casein is the usual test substrate. In the absence of ATP, only oligopeptides shorter than five residues are hydrolyzed (such as succinyl-Leu-Tyr-|-NHMec, and Leu-Tyr-Leu-|-Tyr-Trp, in which cleavage of the -Tyr-|-Leu- and -Tyr-|-Trp bonds also occurs).. Functionally, cleaves peptides in various proteins in a process that requires ATP hydrolysis. Has a chymotrypsin-like activity. Plays a major role in the degradation of misfolded proteins. This Colwellia psychrerythraea (strain 34H / ATCC BAA-681) (Vibrio psychroerythus) protein is ATP-dependent Clp protease proteolytic subunit.